The sequence spans 1510 residues: Chromosome partition protein MukB (1510 aa).

Positions 6–30 (ELENEIELESDEVIMENENVEEIVD) form a coiled coil. Residue 75–82 (GGNGAGKS) participates in ATP binding. Coiled-coil stretches lie at residues 346–506 (QHRL…HKMS), 553–633 (QQTP…NLTA), 673–706 (MQSQLVKERELTMQRDQLEQKRLQLDEQISRLSQ), 821–847 (RAAREKRLEELQIERDEVAEQYAQIAF), 876–1064 (EELM…IQLQ), 1094–1149 (ERAR…RELV), and 1249–1305 (DAIE…QNIS). The interval 707-824 (PDGSEDPRLN…EIPLFGRAAR (118 aa)) is flexible hinge.

The protein belongs to the SMC family. MukB subfamily. As to quaternary structure, homodimerization via its hinge domain. Binds to DNA via its C-terminal region. Interacts, and probably forms a ternary complex, with MukE and MukF via its C-terminal region. The complex formation is stimulated by calcium or magnesium. Interacts with tubulin-related protein FtsZ.

Its subcellular location is the cytoplasm. It is found in the nucleoid. Functionally, plays a central role in chromosome condensation, segregation and cell cycle progression. Functions as a homodimer, which is essential for chromosome partition. Involved in negative DNA supercoiling in vivo, and by this means organize and compact chromosomes. May achieve or facilitate chromosome segregation by condensation DNA from both sides of a centrally located replisome during cell division. The polypeptide is Chromosome partition protein MukB (Haemophilus influenzae (strain 86-028NP)).